A 301-amino-acid chain; its full sequence is Glycine--tRNA ligase alpha subunit (301 aa).

Belongs to the class-II aminoacyl-tRNA synthetase family. As to quaternary structure, tetramer of two alpha and two beta subunits.

The protein resides in the cytoplasm. The enzyme catalyses tRNA(Gly) + glycine + ATP = glycyl-tRNA(Gly) + AMP + diphosphate. The polypeptide is Glycine--tRNA ligase alpha subunit (Alteromonas mediterranea (strain DSM 17117 / CIP 110805 / LMG 28347 / Deep ecotype)).